A 331-amino-acid chain; its full sequence is Major outer membrane protein P.IB (331 aa).

Residues 1 to 19 (MKKSLIALTLAALPVAAMA) form the signal peptide.

This sequence belongs to the Gram-negative porin family. Homotrimer.

It is found in the cell outer membrane. Functionally, serves as a slightly cation selective porin. This chain is Major outer membrane protein P.IB (porB), found in Neisseria meningitidis serogroup B.